The primary structure comprises 67 residues: Small ribosomal subunit protein bS21 (67 aa).

The protein belongs to the bacterial ribosomal protein bS21 family.

In Oleidesulfovibrio alaskensis (strain ATCC BAA-1058 / DSM 17464 / G20) (Desulfovibrio alaskensis), this protein is Small ribosomal subunit protein bS21.